Consider the following 308-residue polypeptide: Ribosomal protein uL3 glutamine methyltransferase (308 aa).

Belongs to the protein N5-glutamine methyltransferase family. PrmB subfamily.

The catalysed reaction is L-glutaminyl-[ribosomal protein uL3] + S-adenosyl-L-methionine = N(5)-methyl-L-glutaminyl-[ribosomal protein uL3] + S-adenosyl-L-homocysteine + H(+). Its function is as follows. Methylates large ribosomal subunit protein uL3 on a specific glutamine residue. The polypeptide is Ribosomal protein uL3 glutamine methyltransferase (Xanthomonas campestris pv. campestris (strain ATCC 33913 / DSM 3586 / NCPPB 528 / LMG 568 / P 25)).